A 215-amino-acid chain; its full sequence is Cytochrome b6 (215 aa).

Residues 32-52 form a helical membrane-spanning segment; sequence IFYCIGGIVFTSFLIQVASGF. Cys35 serves as a coordination point for heme c. Positions 86 and 100 each coordinate heme b. Transmembrane regions (helical) follow at residues 90 to 110, 116 to 136, and 186 to 206; these read ASMM…TGGF, LTWV…VTGY, and LHTF…FLMI. His187 and His202 together coordinate heme b.

This sequence belongs to the cytochrome b family. PetB subfamily. In terms of assembly, the 4 large subunits of the cytochrome b6-f complex are cytochrome b6, subunit IV (17 kDa polypeptide, PetD), cytochrome f and the Rieske protein, while the 4 small subunits are PetG, PetL, PetM and PetN. The complex functions as a dimer. Heme b serves as cofactor. Requires heme c as cofactor.

The protein localises to the plastid. It localises to the chloroplast thylakoid membrane. In terms of biological role, component of the cytochrome b6-f complex, which mediates electron transfer between photosystem II (PSII) and photosystem I (PSI), cyclic electron flow around PSI, and state transitions. This Gracilaria tenuistipitata var. liui (Red alga) protein is Cytochrome b6.